The chain runs to 367 residues: Flagellar P-ring protein (367 aa).

The N-terminal stretch at 1–22 (MRRMLVIRWILAIHLIATQVFA) is a signal peptide.

It belongs to the FlgI family. In terms of assembly, the basal body constitutes a major portion of the flagellar organelle and consists of four rings (L,P,S, and M) mounted on a central rod.

The protein localises to the periplasm. Its subcellular location is the bacterial flagellum basal body. In terms of biological role, assembles around the rod to form the L-ring and probably protects the motor/basal body from shearing forces during rotation. The sequence is that of Flagellar P-ring protein from Legionella pneumophila subsp. pneumophila (strain Philadelphia 1 / ATCC 33152 / DSM 7513).